The primary structure comprises 309 residues: Epidermal retinol dehydrogenase 2 (309 aa).

A helical membrane pass occupies residues 11-31; that stretch reads LFIFLGKSLFSLLEAMIFALL. NADP(+) is bound at residue 44–68; that stretch reads LITGAGSGLGRLLALQFARLGSVLV. Ser-177 lines the substrate pocket. The active-site Proton acceptor is Tyr-190. A helical transmembrane segment spans residues 270-290; it reads LLYFMMFLKSFLPLKTGLLIA.

This sequence belongs to the short-chain dehydrogenases/reductases (SDR) family. As to expression, detected in adult lung. Detected at low levels in adult brain, heart, testis, placenta, cervix, pancreas, uterus, stomach, rectum, small intestine, colon, esophagus, thymus, skin, and skin keratinocyte. Expression is higher in psoriasis lesions relative to unaffected skin from psoriasis patients. Detected in fetal kidney, skin and lung.

The protein resides in the endoplasmic reticulum membrane. It catalyses the reaction all-trans-retinol--[retinol-binding protein] + NAD(+) = all-trans-retinal--[retinol-binding protein] + NADH + H(+). It functions in the pathway cofactor metabolism; retinol metabolism. Functionally, oxidoreductase with strong preference for NAD. Active in both the oxidative and reductive directions. Oxidizes all-trans-retinol in all-trans-retinaldehyde. No activity was detected with 11-cis-retinol or 11-cis-retinaldehyde as substrates with either NAD(+)/NADH or NADP(+)/NADPH. The chain is Epidermal retinol dehydrogenase 2 from Homo sapiens (Human).